A 576-amino-acid polypeptide reads, in one-letter code: WD repeat-containing protein 26 (576 aa).

The span at 1 to 20 (MQSNGTGQEQNHPANTQNGD) shows a compositional bias: polar residues. A disordered region spans residues 1–46 (MQSNGTGQEQNHPANTQNGDANGLQSNAGSASGASGTGSGSLKKKK). Low complexity predominate over residues 21 to 34 (ANGLQSNAGSASGA). Phosphoserine is present on serine 49. The LisH domain maps to 51 to 83 (AEEDVIRLIGQHLHGLGLNQTVDLLMQESGCRL). Residues 84 to 143 (EHSSATKFRNHVMEGEWDKAENDLNELKALMHSPNAIVRMKFLLLQQKYLEYLEDGKVLE) form the CTLH domain. WD repeat units lie at residues 265–304 (EHCN…HQLK), 311–350 (GHAY…GELR), 356–396 (SHED…ESWE), 436–475 (QEDH…LVRK), 478–520 (GVTQ…PIVE), and 523–563 (GHTR…DAQE).

In terms of assembly, forms homooligomers. Identified in the CTLH complex that contains at least MAEA, RMND5A (or alternatively its paralog RMND5B), GID8, WDR26, and RANBP9 and/or RANBP10. Interacts with DDB1-CUL4A/B E3 ligase complexes.

Its subcellular location is the cytoplasm. The protein localises to the nucleus. The protein resides in the mitochondrion. Its function is as follows. G-beta-like protein involved in cell signal transduction. Acts as a negative regulator in MAPK signaling pathway. Functions as a scaffolding protein to promote G beta:gamma-mediated PLCB2 plasma membrane translocation and subsequent activation in leukocytes. Core component of the CTLH E3 ubiquitin-protein ligase complex that mediates ubiquitination and subsequent proteasomal degradation of target proteins. Acts as a negative regulator of the canonical Wnt signaling pathway through preventing ubiquitination of beta-catenin CTNNB1 by the beta-catenin destruction complex, thus negatively regulating CTNNB1 degradation. Serves as a scaffold to coordinate PI3K/AKT pathway-driven cell growth and migration. Protects cells from oxidative stress-induced apoptosis via the down-regulation of AP-1 transcriptional activity as well as by inhibiting cytochrome c release from mitochondria. Also protects cells by promoting hypoxia-mediated autophagy and mitophagy. The polypeptide is WD repeat-containing protein 26 (wdr26) (Danio rerio (Zebrafish)).